Reading from the N-terminus, the 105-residue chain is uncharacterized protein (105 aa).

The tract at residues 81-105 is disordered; the sequence is NNNNKTITVDNNNNNNNNNNNNNNK.

This is an uncharacterized protein from Dictyostelium discoideum (Social amoeba).